The primary structure comprises 266 residues: Early E1A protein (266 aa).

An interaction with RB1 in competition with E2F1 region spans residues 39–47; the sequence is MSLHEMYDL. The PXLXP motif, interaction with host ZMYND11 signature appears at 94 to 98; the sequence is PELQP. The LXCXE motif, interaction with host RB1 signature appears at 103 to 107; the sequence is LFCYE. The segment at 160 to 180 is a zinc-finger region; the sequence is CSSCDYHRKTSGCPEILCSLC. A disordered region spans residues 193–244; sequence VSDSEPDEPDSTTADSNHGSPPTLRCTPPRDLPRPVPVKASPGKRPAVNSLH. Residues 203-212 show a composition bias toward polar residues; sequence STTADSNHGS. The PXDLS motif, CTBP-binding motif lies at 255–259; sequence PLDLS. Residues 261 to 265 carry the Nuclear localization signal motif; the sequence is KRSRS.

The protein belongs to the adenoviridae E1A protein family. In terms of assembly, interacts with host UBE2I; this interaction interferes with polySUMOylation. Interacts with host RB1; this interaction induces the aberrant dissociation of RB1-E2F1 complex thereby disrupting the activity of RB1 and activating E2F1-regulated genes. Interacts with host ATF7; the interaction enhances ATF7-mediated viral transactivation activity which requires the zinc binding domains of both proteins. Isoform early E1A 32 kDa protein and isoform early E1A 26 kDa protein interact (via N-terminus) with CUL1 and E3 ubiquitin ligase RBX1; these interactions inhibit RBX1-CUL1-dependent elongation reaction of ubiquitin chains and attenuate ubiquitination of SCF(FBXW7) target proteins. Interacts (via PXLXP motif) with host ZMYND11/BS69 (via MYND-type zinc finger); this interaction inhibits E1A mediated transactivation. Interacts with host EP300; this interaction stimulates the acetylation of RB1 by recruiting EP300 and RB1 into a multimeric-protein complex. Interacts with host CTBP1 and CTBP2; this interaction seems to potentiate viral replication. Interacts with host DCAF7. Interacts with host DYRK1A. Interacts with host KPNA4; this interaction allows E1A import into the host nucleus. Interacts with host EP400; this interaction stabilizes MYC. Interacts with host TBP protein; this interaction probably disrupts the TBP-TATA complex.

It is found in the host nucleus. Functionally, plays a role in viral genome replication by driving entry of quiescent cells into the cell cycle. Stimulation of progression from G1 to S phase allows the virus to efficiently use the cellular DNA replicating machinery to achieve viral genome replication. E1A protein has both transforming and trans-activating activities. Induces the disassembly of the E2F1 transcription factor from RB1 by direct competition for the same binding site on RB1, with subsequent transcriptional activation of E2F1-regulated S-phase genes and of the E2 region of the adenoviral genome. Release of E2F1 leads to the ARF-mediated inhibition of MDM2 and causes TP53/p53 to accumulate because it is not targeted for degradation by MDM2-mediated ubiquitination anymore. This increase in TP53, in turn, would arrest the cell proliferation and direct its death but this effect is counteracted by the viral protein E1B-55K. Inactivation of the ability of RB1 to arrest the cell cycle is critical for cellular transformation, uncontrolled cellular growth and proliferation induced by viral infection. Interaction with RBX1 and CUL1 inhibits ubiquitination of the proteins targeted by SCF(FBXW7) ubiquitin ligase complex, and may be linked to unregulated host cell proliferation. The tumorigenesis-restraining activity of E1A may be related to the disruption of the host CtBP-CtIP complex through the CtBP binding motif. The protein is Early E1A protein of Simian adenovirus serotype 7 (SAdV-7).